The chain runs to 200 residues: Putative 3-methyladenine DNA glycosylase (200 aa).

Belongs to the DNA glycosylase MPG family.

The sequence is that of Putative 3-methyladenine DNA glycosylase from Methanocella arvoryzae (strain DSM 22066 / NBRC 105507 / MRE50).